The sequence spans 119 residues: Protein phosphatase EYA4 (119 aa).

The protein belongs to the HAD-like hydrolase superfamily. EYA family. The cofactor is Mg(2+).

The protein resides in the cytoplasm. The protein localises to the nucleus. It carries out the reaction O-phospho-L-tyrosyl-[protein] + H2O = L-tyrosyl-[protein] + phosphate. Tyrosine phosphatase that specifically dephosphorylates 'Tyr-142' of histone H2AX (H2AXY142ph). 'Tyr-142' phosphorylation of histone H2AX plays a central role in DNA repair and acts as a mark that distinguishes between apoptotic and repair responses to genotoxic stress. Promotes efficient DNA repair by dephosphorylating H2AX, promoting the recruitment of DNA repair complexes containing MDC1. Its function as histone phosphatase probably explains its role in transcription regulation during organogenesis. May be involved in development of the eye. This chain is Protein phosphatase EYA4 (eya4), found in Takifugu rubripes (Japanese pufferfish).